The primary structure comprises 1104 residues: Transposon Ty4-P Gag-Pol polyprotein (1104 aa).

A coiled-coil region spans residues 48-112 (VKQYQRNLNR…VEKIQLLETN (65 aa)). The segment at 381–501 (QQQLKSSAKE…KTKMVLSRKY (121 aa)) is ty4 protease. Asp414 serves as the catalytic For protease activity; shared with dimeric partner. The segment at 539–599 (AIKPTSSPGF…EPNEFWCQTC (61 aa)) is integrase-type zinc finger-like. The 168-residue stretch at 619-786 (TDHEPGSSWC…LPLKAISRQP (168 aa)) folds into the Integrase catalytic domain. Mg(2+)-binding residues include Asp630 and Asp695.

In terms of assembly, the protease is a homodimer, whose active site consists of two apposed aspartic acid residues. Proteolytically processed into capsid protein (CA), Ty4 protease (PR), integrase (IN) and reverse transcriptase/ribonuclease H (RT) proteins. Initially, virus-like particles (VLPs) are composed of the structural unprocessed proteins Gag and Gag-Pol, and also contain the host initiator methionine tRNA (tRNA(i)-Met) which serves as a primer for minus-strand DNA synthesis, and a dimer of genomic Ty RNA. Processing of the polyproteins occurs within the particle and proceeds by an ordered pathway, called maturation. First, the protease (PR) is released by autocatalytic cleavage of the Gag-Pol polyprotein, and this cleavage is a prerequisite for subsequent processing at the remaining sites to release the mature structural and catalytic proteins. Maturation takes place prior to the RT reaction and is required to produce transposition-competent VLPs.

It localises to the cytoplasm. It is found in the nucleus. It catalyses the reaction DNA(n) + a 2'-deoxyribonucleoside 5'-triphosphate = DNA(n+1) + diphosphate. The enzyme catalyses Endonucleolytic cleavage to 5'-phosphomonoester.. In terms of biological role, capsid protein (CA) is the structural component of the virus-like particle (VLP), forming the shell that encapsulates the retrotransposons dimeric RNA genome. Its function is as follows. The aspartyl protease (PR) mediates the proteolytic cleavages of the Gag and Gag-Pol polyproteins after assembly of the VLP. Functionally, reverse transcriptase/ribonuclease H (RT) is a multifunctional enzyme that catalyzes the conversion of the retro-elements RNA genome into dsDNA within the VLP. The enzyme displays a DNA polymerase activity that can copy either DNA or RNA templates, and a ribonuclease H (RNase H) activity that cleaves the RNA strand of RNA-DNA heteroduplexes during plus-strand synthesis and hydrolyzes RNA primers. The conversion leads to a linear dsDNA copy of the retrotransposon that includes long terminal repeats (LTRs) at both ends. Integrase (IN) targets the VLP to the nucleus, where a subparticle preintegration complex (PIC) containing at least integrase and the newly synthesized dsDNA copy of the retrotransposon must transit the nuclear membrane. Once in the nucleus, integrase performs the integration of the dsDNA into the host genome. The sequence is that of Transposon Ty4-P Gag-Pol polyprotein (TY4B-P) from Saccharomyces cerevisiae (strain ATCC 204508 / S288c) (Baker's yeast).